Reading from the N-terminus, the 372-residue chain is Methylthioribose-1-phosphate isomerase 2 (372 aa).

Catalysis depends on Asp-254, which acts as the Proton donor.

It belongs to the eIF-2B alpha/beta/delta subunits family. MtnA subfamily.

Its subcellular location is the cytoplasm. It localises to the nucleus. The enzyme catalyses 5-(methylsulfanyl)-alpha-D-ribose 1-phosphate = 5-(methylsulfanyl)-D-ribulose 1-phosphate. It participates in amino-acid biosynthesis; L-methionine biosynthesis via salvage pathway; L-methionine from S-methyl-5-thio-alpha-D-ribose 1-phosphate: step 1/6. Its function is as follows. Catalyzes the interconversion of methylthioribose-1-phosphate (MTR-1-P) into methylthioribulose-1-phosphate (MTRu-1-P). The chain is Methylthioribose-1-phosphate isomerase 2 from Trypanosoma cruzi (strain CL Brener).